The following is a 72-amino-acid chain: UPF0346 protein EF_1680 (72 aa).

It belongs to the UPF0346 family.

The protein is UPF0346 protein EF_1680 of Enterococcus faecalis (strain ATCC 700802 / V583).